We begin with the raw amino-acid sequence, 260 residues long: MKIKLVSYSKDGERIVAIAAKMSRSRKGWDYHEKEMTDDEIETWIRDSITHGYWSVLEHSVYTFSIEGISRVASHQLVRHRIASYTQMSHRFAKPVDKYYKPITPPSIEKRGKEVVDKAYQDAYNYFYQLLEKGVPEEDARYVLPNGVNTNIVVTMNARELYNFFGLRLCSRAQWEIRAIAWKMLDEVKRVHPRLFKYAGPNCIIHENFIRENPITLDDIDNTVFISQRCIEGVTREGIPKCVKNARSILVSEDGVVMGK.

The ThyX domain maps to 1–202; sequence MKIKLVSYSK…PRLFKYAGPN (202 aa). Residues serine 55, 79-81, and glutamine 87 each bind FAD; that span reads RHR. DUMP contacts are provided by residues 76-79, 87-91, and arginine 141; these read QLVR and QMSHR. The ThyX motif motif lies at 79-89; that stretch reads RHRIASYTQMS. Residues 157-159 and asparagine 163 each bind FAD; that span reads NAR. DUMP is bound at residue arginine 168. Arginine 168 acts as the Involved in ionization of N3 of dUMP, leading to its activation in catalysis.

The protein belongs to the thymidylate synthase ThyX family. As to quaternary structure, homotetramer. FAD serves as cofactor.

It carries out the reaction dUMP + (6R)-5,10-methylene-5,6,7,8-tetrahydrofolate + NADPH + H(+) = dTMP + (6S)-5,6,7,8-tetrahydrofolate + NADP(+). It participates in pyrimidine metabolism; dTTP biosynthesis. In terms of biological role, catalyzes the reductive methylation of 2'-deoxyuridine-5'-monophosphate (dUMP) to 2'-deoxythymidine-5'-monophosphate (dTMP) while utilizing 5,10-methylenetetrahydrofolate (mTHF) as the methyl donor, and NADPH and FADH(2) as the reductant. This is Flavin-dependent thymidylate synthase from Sulfolobus acidocaldarius (strain ATCC 33909 / DSM 639 / JCM 8929 / NBRC 15157 / NCIMB 11770).